The following is a 299-amino-acid chain: Prolyl 4-hydroxylase 2 (299 aa).

At 1-5 the chain is on the cytoplasmic side; sequence MSMSR. Residues 6 to 26 traverse the membrane as a helical; Signal-anchor for type II membrane protein segment; sequence LGLLLFVAILLVLLQSSTCLI. The Lumenal segment spans residues 27–299; sequence SSPSSIINPS…GNCRRSCKAC (273 aa). One can recognise a Fe2OG dioxygenase domain in the interval 121–246; that stretch reads NGEDLQVLRY…KWSATKWIHV (126 aa). Fe cation is bound by residues His139 and Asp141. N-linked (GlcNAc...) asparagine glycosylation is present at Asn165. Position 227 (His227) interacts with Fe cation. Lys237 contacts 2-oxoglutarate. N-linked (GlcNAc...) asparagine glycosylation is found at Asn258 and Asn263. The ShKT domain maps to 259–299; it reads CTDVNESCERWAVLGECGKNPEYMVGTPEIPGNCRRSCKAC. Disulfide bonds link Cys259-Cys299, Cys266-Cys292, and Cys275-Cys296.

This sequence belongs to the P4HA family. The cofactor is Fe(2+). Requires L-ascorbate as cofactor. In terms of tissue distribution, expressed in epidermal root hair cells (trichoblasts).

The protein localises to the endoplasmic reticulum membrane. Its subcellular location is the golgi apparatus membrane. It catalyses the reaction L-prolyl-[collagen] + 2-oxoglutarate + O2 = trans-4-hydroxy-L-prolyl-[collagen] + succinate + CO2. Its function is as follows. Catalyzes the post-translational formation of 4-hydroxyproline in -Xaa-Pro-Gly- sequences in proline-rich peptide sequences of plant glycoproteins and other proteins. Hydroxyprolines are important constituent of many plant cell wall glycoproteins such as extensins, hydroxyproline-rich glycoproteins, lectins and arabinogalactan proteins. Possesses high affinity for leucine-rich repeat and proline-rich extensins of root cell walls that are essential for root hair development. Hydroxyprolines define the subsequent O-glycosylation sites by arabinosyltransferases which elongate the O-arabinosides on extensins. Has low affinity for the substrates tested in vitro. The polypeptide is Prolyl 4-hydroxylase 2 (Arabidopsis thaliana (Mouse-ear cress)).